We begin with the raw amino-acid sequence, 1376 residues long: Phospholipid-transporting ATPase DRS2 (1376 aa).

Over residues 1-10 the composition is skewed to gly residues; the sequence is MAGRPTGGPQ. Disordered stretches follow at residues 1 to 151 and 180 to 217; these read MAGR…AAAR and GYSEMDLPLTEPGGGGGGAGGGGHSRADSSGIDPPKRD. At 1–306 the chain is on the cytoplasmic side; it reads MAGRPTGGPQ…QIPGLSPTNR (306 aa). The span at 40 to 50 shows a compositional bias: basic and acidic residues; it reads DLMRTYTRDQE. The span at 85–96 shows a compositional bias: low complexity; that stretch reads QSSSSNNNNNNN. Over residues 97-115 the composition is skewed to polar residues; the sequence is VSAPYSRSGRQYSQTSDLG. A compositionally biased stretch (gly residues) spans 191-203; the sequence is PGGGGGGAGGGGH. Residues 307–327 form a helical membrane-spanning segment; that stretch reads FTTIIPLVAVLMVSAGKELVE. Topologically, residues 328–509 are extracellular; it reads DYRRKQADAA…KVEKKLNTLV (182 aa). N-linked (GlcNAc...) asparagine glycosylation is found at Asn339, Asn433, and Asn490. A helical membrane pass occupies residues 510–530; that stretch reads LLLVGILMVLSIISTVGDLII. The Cytoplasmic portion of the chain corresponds to 531–559; that stretch reads RRVEGDAISYLMLDQPDTAGKIAETFFKD. A helical membrane pass occupies residues 560–580; it reads MVTYWVLFSSLVPISLFVTVE. The Extracellular portion of the chain corresponds to 581-1107; the sequence is MVKYWHGILI…VFSGAVIYES (527 aa). The 4-aspartylphosphate intermediate role is filled by Asp625. ATP is bound by residues Asp625, Lys626, and Thr627. Asp625 is a binding site for Mg(2+). Mg(2+) is bound at residue Thr627. N-linked (GlcNAc...) asparagine glycosylation is present at Asn679. ATP is bound by residues Glu720 and Phe761. Asn762 is a glycosylation site (N-linked (GlcNAc...) asparagine). Residues Ser763, Lys766, Lys784, Arg817, Thr818, Thr898, Gly899, Asp900, Arg991, and Lys997 each contribute to the ATP site. Asp1018 serves as a coordination point for Mg(2+). ATP is bound by residues Asn1021 and Asp1022. Position 1022 (Asp1022) interacts with Mg(2+). The N-linked (GlcNAc...) asparagine glycan is linked to Asn1083. The helical transmembrane segment at 1108–1128 threads the bilayer; it reads WTLTFYNVFYTVLPPLALGIL. Residues 1129–1165 lie on the Cytoplasmic side of the membrane; the sequence is DQFISARLLDRYPQLYSMGQQNQFFRMKVFIEWLLNA. Residues 1166-1186 form a helical membrane-spanning segment; the sequence is VYHSIILYVFGELIWHGDLIL. Topologically, residues 1187-1190 are extracellular; that stretch reads ENGQ. Residues 1191–1211 traverse the membrane as a helical segment; sequence IAGHWMWGTALYAPVLLTVLG. Lys1212 provides a ligand contact to a 1,2-diacyl-sn-glycero-3-phospho-(1D-myo-inositol 4-phosphate). Residues 1212-1224 lie on the Cytoplasmic side of the membrane; the sequence is KAGLVTSNWTKYH. Residues 1225-1245 traverse the membrane as a helical segment; sequence VIAIPGSMAIWWIFIAVYGTV. Residues 1246 to 1257 are Extracellular-facing; the sequence is APMIPFSPEFHG. Residues 1258 to 1278 traverse the membrane as a helical segment; that stretch reads IVPKLYSSPIFWLQSFALAIL. The Cytoplasmic portion of the chain corresponds to 1279–1376; it reads CLLRDFAWKY…TSSRPQGQGT (98 aa). Arg1282, Trp1286, Lys1287, Tyr1298, and His1299 together coordinate a 1,2-diacyl-sn-glycero-3-phospho-(1D-myo-inositol 4-phosphate).

This sequence belongs to the cation transport ATPase (P-type) (TC 3.A.3) family. Type IV subfamily. Mg(2+) is required as a cofactor.

The protein localises to the cell membrane. It localises to the golgi apparatus. Its subcellular location is the trans-Golgi network membrane. It carries out the reaction ATP + H2O + phospholipidSide 1 = ADP + phosphate + phospholipidSide 2.. The catalysed reaction is a 1,2-diacyl-sn-glycero-3-phospho-L-serine(out) + ATP + H2O = a 1,2-diacyl-sn-glycero-3-phospho-L-serine(in) + ADP + phosphate + H(+). It catalyses the reaction a 1,2-diacyl-sn-glycero-3-phosphoethanolamine(out) + ATP + H2O = a 1,2-diacyl-sn-glycero-3-phosphoethanolamine(in) + ADP + phosphate + H(+). Functionally, catalytic component of a P4-ATPase flippase complex which catalyzes the hydrolysis of ATP coupled to the transport of phosphatidylserine and small amounts of ethanolamine from the lumen to the cytosolic leaflet of the trans-Golgi network and cell membrane and ensures the maintenance of asymmetric distribution of phospholipids. Required for efficient vesicle transport during toxin secretion. The sequence is that of Phospholipid-transporting ATPase DRS2 (DRS2) from Verticillium dahliae (strain VdLs.17 / ATCC MYA-4575 / FGSC 10137) (Verticillium wilt).